The chain runs to 145 residues: Natriuretic peptides A (145 aa).

The signal sequence occupies residues 1 to 23; that stretch reads MGTSFVGYLTFVLLLLALTKVRG. The propeptide occupies 24 to 117; the sequence is GPAYNSPLSS…KLRELLNAPR (94 aa). Cys125 and Cys141 form a disulfide bridge.

The protein belongs to the natriuretic peptide family. Cleaved upon secretion to produce the functional hormone.

The protein resides in the secreted. In terms of biological role, hormone playing a key role in cardiovascular homeostasis through regulation of natriuresis, diuresis, and vasodilation. Has a cGMP-stimulating activity. This Aquarana catesbeiana (American bullfrog) protein is Natriuretic peptides A.